The primary structure comprises 513 residues: Probable DNA ligase (513 aa).

ATP is bound at residue Glu213. Lys215 acts as the N6-AMP-lysine intermediate in catalysis. ATP is bound by residues Arg220, Arg235, Glu264, Phe304, Arg376, and Lys382.

It belongs to the ATP-dependent DNA ligase family. Mg(2+) serves as cofactor.

The catalysed reaction is ATP + (deoxyribonucleotide)n-3'-hydroxyl + 5'-phospho-(deoxyribonucleotide)m = (deoxyribonucleotide)n+m + AMP + diphosphate.. Functionally, DNA ligase that seals nicks in double-stranded DNA during DNA replication, DNA recombination and DNA repair. This Anaeromyxobacter dehalogenans (strain 2CP-1 / ATCC BAA-258) protein is Probable DNA ligase.